The following is a 178-amino-acid chain: ATP-dependent protease subunit HslV (178 aa).

Residue Thr-7 is part of the active site. Na(+) contacts are provided by Gly-162, Cys-165, and Thr-168.

The protein belongs to the peptidase T1B family. HslV subfamily. In terms of assembly, a double ring-shaped homohexamer of HslV is capped on each side by a ring-shaped HslU homohexamer. The assembly of the HslU/HslV complex is dependent on binding of ATP.

It is found in the cytoplasm. It catalyses the reaction ATP-dependent cleavage of peptide bonds with broad specificity.. With respect to regulation, allosterically activated by HslU binding. Protease subunit of a proteasome-like degradation complex believed to be a general protein degrading machinery. The sequence is that of ATP-dependent protease subunit HslV from Leptothrix cholodnii (strain ATCC 51168 / LMG 8142 / SP-6) (Leptothrix discophora (strain SP-6)).